Reading from the N-terminus, the 433-residue chain is Epi-neemfruitin B synthase L1AT (433 aa).

Catalysis depends on proton acceptor residues His-151 and Asp-372.

Belongs to the plant acyltransferase family. As to quaternary structure, monomer. In terms of tissue distribution, mainly expressed in petioles and, to a lower extent, in roots.

It catalyses the reaction (21S)-21-acetyl-1-hydroxy-apo-melianone + acetyl-CoA = epi-neemfruitin B + acetate + CoA + H(+). The protein operates within secondary metabolite biosynthesis; terpenoid biosynthesis. Functionally, acetyltransferase involved in the biosynthesis of limonoids triterpene natural products such as azadirachtin, an antifeedant widely used as bioinsecticide, and possessing many medicinal applications including anti-tumoral, anti-malarial, anti-rheumatic, antibacterial, anti-inflammatory, anti-pyretic and diuretic effects. Catalyzes the formation of epi-neemfruitin B from (21S)-21-acetyl-1-hydroxy-apo-melianone. The protein is Epi-neemfruitin B synthase L1AT of Melia azedarach (Chinaberry tree).